Reading from the N-terminus, the 564-residue chain is 60 kDa lysophospholipase (564 aa).

Positions 9–355 (RRLLAIYTGG…NDRKKLLAKD (347 aa)) constitute an Asparaginase/glutaminase domain. Residue T19 is the Acyl-ester intermediate of the active site. The segment at 41-350 (TLHMFHDEEY…PGLSLNDRKK (310 aa)) is asparaginase. Residues 84-86 (DSS) and 116-117 (TD) each bind substrate. 5 ANK repeats span residues 141–170 (GAQVPIHALWSDGRENLLGALLMAGQYVIP), 396–426 (VLLPGLALAAAHAGDLDTLQAFVELDRDLNL), 430–459 (SGQTPLHVAARRGHAAVVTMLLQRGADVDA), 463–492 (DGQSPLLLAVRGRHQSVIGLLRAAGARLSP), and 530–559 (DGHCALQVAEAAGNADVVALLQSFKDSVCA). S478 is modified (phosphoserine).

This sequence in the N-terminal section; belongs to the asparaginase 1 family. As to quaternary structure, monomer.

It catalyses the reaction a 1-acyl-sn-glycero-3-phosphocholine + H2O = sn-glycerol 3-phosphocholine + a fatty acid + H(+). It carries out the reaction L-asparagine + H2O = L-aspartate + NH4(+). The enzyme catalyses a 1-O-alkyl-2-acetyl-sn-glycero-3-phosphocholine + H2O = a 1-O-alkyl-sn-glycero-3-phosphocholine + acetate + H(+). The catalysed reaction is 1-hexadecanoyl-sn-glycero-3-phosphocholine + H2O = sn-glycerol 3-phosphocholine + hexadecanoate + H(+). It catalyses the reaction 2 1-hexadecanoyl-sn-glycero-3-phosphocholine = 1,2-dihexadecanoyl-sn-glycero-3-phosphocholine + sn-glycerol 3-phosphocholine. It carries out the reaction 1-octadecanoyl-sn-glycero-3-phosphocholine + H2O = octadecanoate + sn-glycerol 3-phosphocholine + H(+). The enzyme catalyses 1-(9Z-octadecenoyl)-sn-glycero-3-phosphocholine + H2O = sn-glycerol 3-phosphocholine + (9Z)-octadecenoate + H(+). The catalysed reaction is 1-hexadecanoyl-sn-glycero-3-phosphoethanolamine + H2O = sn-glycero-3-phosphoethanolamine + hexadecanoate + H(+). It catalyses the reaction 1-(9Z-octadecenoyl)-sn-glycero-3-phosphoethanolamine + H2O = sn-glycero-3-phosphoethanolamine + (9Z)-octadecenoate + H(+). It carries out the reaction 1-hexadecanoyl-sn-glycero-3-phosphoethanolamine + 1-hexadecanoyl-sn-glycero-3-phosphocholine = 1,2-dihexadecanoyl-sn-glycero-3-phosphoethanolamine + sn-glycerol 3-phosphocholine. The enzyme catalyses 2-(5Z,8Z,11Z,14Z)-eicosatetraenoyl-sn-glycero-3-phosphocholine + H2O = sn-glycerol 3-phosphocholine + (5Z,8Z,11Z,14Z)-eicosatetraenoate + H(+). The catalysed reaction is 2-hexadecanoyl-sn-glycero-3-phosphocholine + H2O = sn-glycerol 3-phosphocholine + hexadecanoate + H(+). It catalyses the reaction 2 2-hexadecanoyl-sn-glycero-3-phosphocholine = 1,2-dihexadecanoyl-sn-glycero-3-phosphocholine + sn-glycerol 3-phosphocholine. It carries out the reaction 1-O-(9Z)-octadecenoyl-2-O-acetyl-sn-glycero-3-phosphocholine + H2O = 2-acetyl-sn-glycero-3-phosphocholine + (9Z)-octadecenoate + H(+). The enzyme catalyses a 1-acyl-sn-glycero-3-phospho-(1D-myo-inositol) + 1-hexadecanoyl-sn-glycero-3-phosphocholine = a 1-acyl-2-hexadecanoyl-sn-glycero-3-phospho-(1D-myo-inositol) + sn-glycerol 3-phosphocholine. The catalysed reaction is 2 2-(5Z,8Z,11Z,14Z)-eicosatetraenoyl-sn-glycero-3-phosphocholine = 1,2-di-(5Z,8Z,11Z,14Z-eicosatetraenoyl)-sn-glycero-3-phosphocholine + sn-glycerol 3-phosphocholine. Functionally, exhibits lysophospholipase, transacylase, PAF acetylhydrolase and asparaginase activities. Can catalyze three types of transacylation reactions: (1) acyl transfer from 1-acyl-sn-glycero-3-phosphocholine (1-acyl-GPC) to the sn-1(3) positions of glycerol and 2-acylglycerol (sn-1 to -1(3) transfer), (2) acyl transfer from 1-acyl-GPC to the sn-2 positions of 1-acyl-GPC, 1-acyl-sn-glycero-3-phosphoethanolamine (1-acyl-GPE), and other lysophospholipids (sn-1 to -2 transfer) and (3) acyl transfer from 2-acyl-GPC to the sn-1 position of 2-acyl-GPC and 2-acyl-GPE (sn-2 to -1 transfer). Mediates the synthesis of 1-arachidonoyl species of phospholipids by transferring the arachidonoyl residue from 2-arachidonoyl lysophospholipid to the sn-1 position of 2-acyl lysophospholipid. The protein is 60 kDa lysophospholipase (Aspg) of Mus musculus (Mouse).